We begin with the raw amino-acid sequence, 156 residues long: 6,7-dimethyl-8-ribityllumazine synthase (156 aa).

Residues Phe23, 57 to 59, and 81 to 83 contribute to the 5-amino-6-(D-ribitylamino)uracil site; these read AFE and AVI. Position 86 to 87 (86 to 87) interacts with (2S)-2-hydroxy-3-oxobutyl phosphate; the sequence is AT. The Proton donor role is filled by His89. Asn114 contributes to the 5-amino-6-(D-ribitylamino)uracil binding site. (2S)-2-hydroxy-3-oxobutyl phosphate is bound at residue Arg128.

This sequence belongs to the DMRL synthase family.

It carries out the reaction (2S)-2-hydroxy-3-oxobutyl phosphate + 5-amino-6-(D-ribitylamino)uracil = 6,7-dimethyl-8-(1-D-ribityl)lumazine + phosphate + 2 H2O + H(+). The protein operates within cofactor biosynthesis; riboflavin biosynthesis; riboflavin from 2-hydroxy-3-oxobutyl phosphate and 5-amino-6-(D-ribitylamino)uracil: step 1/2. In terms of biological role, catalyzes the formation of 6,7-dimethyl-8-ribityllumazine by condensation of 5-amino-6-(D-ribitylamino)uracil with 3,4-dihydroxy-2-butanone 4-phosphate. This is the penultimate step in the biosynthesis of riboflavin. The chain is 6,7-dimethyl-8-ribityllumazine synthase from Aliarcobacter butzleri (strain RM4018) (Arcobacter butzleri).